We begin with the raw amino-acid sequence, 2144 residues long: HEAT repeat-containing protein 1 (2144 aa).

An N-acetylmethionine modification is found at M1. T2 bears the N-acetylthreonine; in HEAT repeat-containing protein 1, N-terminally processed mark. A Phosphoserine modification is found at S516. An HEAT 1 repeat occupies 913–951 (ASISSPVVTSLLINLGSPVKEVRRAAIQCLQALSGVASP). Residues 1170-1191 (KAKPLGTVQQKRRQKMQQKKSQ) are disordered. At S1190 the chain carries Phosphoserine. Residues 1347–1385 (NKTVKMVIPALIQSDSGDSIEVSRNVEEIVVKIISVFVD) form an HEAT 2 repeat. Phosphoserine is present on S1492. HEAT repeat units lie at residues 1594–1632 (LLPT…QNIS), 1730–1770 (IPQL…VVET), and 2100–2138 (IVLL…VLGE).

Belongs to the HEATR1/UTP10 family. As to quaternary structure, part of the small subunit (SSU) processome, composed of more than 70 proteins and the RNA chaperone small nucleolar RNA (snoRNA) U3. Interacts with MYC; the interaction is required for localization of MYC to the nucleolus.

Its subcellular location is the nucleus. It is found in the nucleolus. In terms of biological role, ribosome biogenesis factor; required for recruitment of Myc to nucleoli. Involved in nucleolar processing of pre-18S ribosomal RNA. Required for optimal pre-ribosomal RNA transcription by RNA polymerase I. Part of the small subunit (SSU) processome, first precursor of the small eukaryotic ribosomal subunit. During the assembly of the SSU processome in the nucleolus, many ribosome biogenesis factors, an RNA chaperone and ribosomal proteins associate with the nascent pre-rRNA and work in concert to generate RNA folding, modifications, rearrangements and cleavage as well as targeted degradation of pre-ribosomal RNA by the RNA exosome. Involved in neuronal-lineage cell proliferation. This Homo sapiens (Human) protein is HEAT repeat-containing protein 1.